Reading from the N-terminus, the 273-residue chain is Shikimate kinase (273 aa).

85-95 lines the ATP pocket; sequence PVGKGLKSSSA.

The protein belongs to the GHMP kinase family. Archaeal shikimate kinase subfamily.

It localises to the cytoplasm. It catalyses the reaction shikimate + ATP = 3-phosphoshikimate + ADP + H(+). It participates in metabolic intermediate biosynthesis; chorismate biosynthesis; chorismate from D-erythrose 4-phosphate and phosphoenolpyruvate: step 5/7. The polypeptide is Shikimate kinase (Pyrococcus furiosus (strain ATCC 43587 / DSM 3638 / JCM 8422 / Vc1)).